The chain runs to 241 residues: Uridylate kinase (241 aa).

Residue 12–15 (KLSG) participates in ATP binding. The tract at residues 20–25 (GDKGTG) is involved in allosteric activation by GTP. Residue glycine 54 coordinates UMP. Glycine 55 and arginine 59 together coordinate ATP. UMP-binding positions include aspartate 74 and 135-142 (TGSPYFST). Residues asparagine 163, tyrosine 169, and aspartate 172 each coordinate ATP.

This sequence belongs to the UMP kinase family. Homohexamer.

It is found in the cytoplasm. It catalyses the reaction UMP + ATP = UDP + ADP. The protein operates within pyrimidine metabolism; CTP biosynthesis via de novo pathway; UDP from UMP (UMPK route): step 1/1. Its activity is regulated as follows. Allosterically activated by GTP. Inhibited by UTP. Its function is as follows. Catalyzes the reversible phosphorylation of UMP to UDP. In Pediococcus pentosaceus (strain ATCC 25745 / CCUG 21536 / LMG 10740 / 183-1w), this protein is Uridylate kinase.